Here is a 417-residue protein sequence, read N- to C-terminus: Arginine biosynthesis bifunctional protein ArgJ (417 aa).

The substrate site is built by Thr-162, Lys-188, Thr-199, Glu-289, Asn-412, and Ser-417. Residue Thr-199 is the Nucleophile of the active site.

This sequence belongs to the ArgJ family. As to quaternary structure, heterotetramer of two alpha and two beta chains.

The protein resides in the cytoplasm. It carries out the reaction N(2)-acetyl-L-ornithine + L-glutamate = N-acetyl-L-glutamate + L-ornithine. The catalysed reaction is L-glutamate + acetyl-CoA = N-acetyl-L-glutamate + CoA + H(+). The protein operates within amino-acid biosynthesis; L-arginine biosynthesis; L-ornithine and N-acetyl-L-glutamate from L-glutamate and N(2)-acetyl-L-ornithine (cyclic): step 1/1. It participates in amino-acid biosynthesis; L-arginine biosynthesis; N(2)-acetyl-L-ornithine from L-glutamate: step 1/4. Catalyzes two activities which are involved in the cyclic version of arginine biosynthesis: the synthesis of N-acetylglutamate from glutamate and acetyl-CoA as the acetyl donor, and of ornithine by transacetylation between N(2)-acetylornithine and glutamate. This is Arginine biosynthesis bifunctional protein ArgJ from Nitrobacter winogradskyi (strain ATCC 25391 / DSM 10237 / CIP 104748 / NCIMB 11846 / Nb-255).